Reading from the N-terminus, the 510-residue chain is ATP synthase subunit alpha 1 (510 aa).

169–176 (GDRQTGKT) is an ATP binding site.

It belongs to the ATPase alpha/beta chains family. As to quaternary structure, F-type ATPases have 2 components, CF(1) - the catalytic core - and CF(0) - the membrane proton channel. CF(1) has five subunits: alpha(3), beta(3), gamma(1), delta(1), epsilon(1). CF(0) has three main subunits: a(1), b(2) and c(9-12). The alpha and beta chains form an alternating ring which encloses part of the gamma chain. CF(1) is attached to CF(0) by a central stalk formed by the gamma and epsilon chains, while a peripheral stalk is formed by the delta and b chains.

The protein localises to the cell inner membrane. It carries out the reaction ATP + H2O + 4 H(+)(in) = ADP + phosphate + 5 H(+)(out). Functionally, produces ATP from ADP in the presence of a proton gradient across the membrane. The alpha chain is a regulatory subunit. The sequence is that of ATP synthase subunit alpha 1 from Marinomonas sp. (strain MWYL1).